The chain runs to 343 residues: Pseudaminic acid synthase (343 aa).

One can recognise an AFP-like domain in the interval 287-343 (SLYASKDIKKGEMFSEENVKSVRPSFGLHPKFYQELLGKKASKDIKFGDALKQGDFQ).

The protein belongs to the pseudaminic acid synthase family. It depends on a divalent metal cation as a cofactor.

It catalyses the reaction 2,4-diacetamido-2,4,6-trideoxy-beta-L-altrose + phosphoenolpyruvate + H2O = pseudaminate + phosphate. In terms of biological role, catalyzes the fifth step in the biosynthesis of pseudaminic acid, a sialic-acid-like sugar that is used to modify flagellin. Catalyzes the condensation of phosphoenolpyruvate with 2,4-diacetamido-2,4,6-trideoxy-beta-l-altropyranose, forming pseudaminic acid. This chain is Pseudaminic acid synthase (pseI), found in Campylobacter jejuni subsp. jejuni serotype O:2 (strain ATCC 700819 / NCTC 11168).